A 605-amino-acid polypeptide reads, in one-letter code: MRTHYCGDVRLRDVGTTVTLYGWVDRRRDHGGVIFIDLRDRSGIVQIVSDPQRTPDAYPQAERLRSEYVVKVVGRVSKRPADSVNPKLATGDIEIYADGIEVLNTVRQQLPFAISSTENEEVREEVRLRYRYLDLRRERMARNLRLRHRVVQAMRRFLEDEAGFIEVETPILTRSTPEGARDYLVPSRVNPGEWFALPQSPQLFKQLLMVAGCDRYYQIAHCFRDEDLRADRQPEFTQLDMEMSFMDQEEILDLNEALICHIFKTVKGIELPRPFPRLSYQEAMDRYGTDKPDTRYGLELVDVSDILKDSGFKVFSGAIAQGGVVKILPIPNGSDRISNVRIKPGGDLFQEATTAGAKGLAYIRVRNNGEIDTIGAIKDNLSPEQKALLLERTGAQPGHLLLFGAGETATVNKTLDRLRQTIAREFNLIDPTATHLLWVVDFPMFEWNAEEKRLEALHHPFTAPHPEDLGDLKTARAQAYDLIFNGHEVGGGSLRIHQPELQRQVFEIIGIDEATAQEKFGFLLEAFEFGTPPHGGIAYGLDRLVMLLAGADSIRDTIAFPKTQQARCLLTGAPSSVEPQQLKELHVTPAKPAKTTAKTKPRPAD.

Glutamate 178 contacts L-aspartate. An aspartate region spans residues 202–205 (QLFK). Arginine 224 contributes to the L-aspartate binding site. ATP-binding positions include 224–226 (RDE) and glutamine 233. An L-aspartate-binding site is contributed by histidine 458. ATP is bound at residue glutamate 488. Arginine 495 contacts L-aspartate. 540-543 (GLDR) contacts ATP. The disordered stretch occupies residues 580–605 (QQLKELHVTPAKPAKTTAKTKPRPAD).

Belongs to the class-II aminoacyl-tRNA synthetase family. Type 1 subfamily. In terms of assembly, homodimer.

The protein localises to the cytoplasm. It catalyses the reaction tRNA(Asx) + L-aspartate + ATP = L-aspartyl-tRNA(Asx) + AMP + diphosphate. Its function is as follows. Aspartyl-tRNA synthetase with relaxed tRNA specificity since it is able to aspartylate not only its cognate tRNA(Asp) but also tRNA(Asn). Reaction proceeds in two steps: L-aspartate is first activated by ATP to form Asp-AMP and then transferred to the acceptor end of tRNA(Asp/Asn). In Thermosynechococcus vestitus (strain NIES-2133 / IAM M-273 / BP-1), this protein is Aspartate--tRNA(Asp/Asn) ligase.